Reading from the N-terminus, the 472-residue chain is Probable dipeptidase A (472 aa).

Cysteine 10 is an active-site residue.

This sequence belongs to the peptidase C69 family.

It carries out the reaction an L-aminoacyl-L-amino acid + H2O = 2 an L-alpha-amino acid. The polypeptide is Probable dipeptidase A (pepDA) (Streptococcus pyogenes serotype M1).